The chain runs to 284 residues: Phosphonates import ATP-binding protein PhnC 2 (284 aa).

The ABC transporter domain occupies 5 to 253; the sequence is IEVRGLSKSF…MLRDLYGTEA (249 aa). Residue 38-45 participates in ATP binding; it reads GASGSGKS.

It belongs to the ABC transporter superfamily. Phosphonates importer (TC 3.A.1.9.1) family. In terms of assembly, the complex is composed of two ATP-binding proteins (PhnC), two transmembrane proteins (PhnE) and a solute-binding protein (PhnD).

Its subcellular location is the cell inner membrane. It carries out the reaction phosphonate(out) + ATP + H2O = phosphonate(in) + ADP + phosphate + H(+). Functionally, part of the ABC transporter complex PhnCDE involved in phosphonates import. Responsible for energy coupling to the transport system. This chain is Phosphonates import ATP-binding protein PhnC 2, found in Cupriavidus necator (strain ATCC 17699 / DSM 428 / KCTC 22496 / NCIMB 10442 / H16 / Stanier 337) (Ralstonia eutropha).